The chain runs to 590 residues: Aspartate--tRNA(Asp/Asn) ligase (590 aa).

Glutamate 173 is an L-aspartate binding site. Positions 197–200 (QIFK) are aspartate. Arginine 219 contacts L-aspartate. ATP contacts are provided by residues 219–221 (RDE) and glutamine 228. Residue histidine 450 coordinates L-aspartate. An ATP-binding site is contributed by glutamate 484. Arginine 491 contributes to the L-aspartate binding site. Position 536–539 (536–539 (GLDR)) interacts with ATP.

This sequence belongs to the class-II aminoacyl-tRNA synthetase family. Type 1 subfamily. Homodimer.

It localises to the cytoplasm. It carries out the reaction tRNA(Asx) + L-aspartate + ATP = L-aspartyl-tRNA(Asx) + AMP + diphosphate. Functionally, aspartyl-tRNA synthetase with relaxed tRNA specificity since it is able to aspartylate not only its cognate tRNA(Asp) but also tRNA(Asn). Reaction proceeds in two steps: L-aspartate is first activated by ATP to form Asp-AMP and then transferred to the acceptor end of tRNA(Asp/Asn). The protein is Aspartate--tRNA(Asp/Asn) ligase of Coxiella burnetii (strain RSA 493 / Nine Mile phase I).